We begin with the raw amino-acid sequence, 137 residues long: ATP synthase epsilon chain (137 aa).

The protein belongs to the ATPase epsilon chain family. In terms of assembly, F-type ATPases have 2 components, CF(1) - the catalytic core - and CF(0) - the membrane proton channel. CF(1) has five subunits: alpha(3), beta(3), gamma(1), delta(1), epsilon(1). CF(0) has three main subunits: a, b and c.

It is found in the cell inner membrane. In terms of biological role, produces ATP from ADP in the presence of a proton gradient across the membrane. This is ATP synthase epsilon chain from Yersinia pestis bv. Antiqua (strain Antiqua).